Consider the following 148-residue polypeptide: Protein E6 (148 aa).

2 zinc fingers span residues 34-71 (CKFC…CSSC) and 108-144 (CRYC…CRHC).

The protein belongs to the papillomaviridae E6 protein family. Forms homodimers. Interacts with ubiquitin-protein ligase UBE3A/E6-AP; this interaction stimulates UBE3A ubiquitin activity. Interacts with host BAK1.

The protein resides in the host cytoplasm. Its subcellular location is the host nucleus. Plays a major role in the induction and maintenance of cellular transformation. E6 associates with host UBE3A/E6-AP ubiquitin-protein ligase and modulates its activity. Protects host keratinocytes from apoptosis by mediating the degradation of host BAK1. May also inhibit host immune response. The sequence is that of Protein E6 from Human papillomavirus 9.